The chain runs to 344 residues: Phosphate acyltransferase (344 aa).

The protein belongs to the PlsX family. In terms of assembly, homodimer. Probably interacts with PlsY.

The protein localises to the cytoplasm. It carries out the reaction a fatty acyl-[ACP] + phosphate = an acyl phosphate + holo-[ACP]. Its pathway is lipid metabolism; phospholipid metabolism. Catalyzes the reversible formation of acyl-phosphate (acyl-PO(4)) from acyl-[acyl-carrier-protein] (acyl-ACP). This enzyme utilizes acyl-ACP as fatty acyl donor, but not acyl-CoA. This chain is Phosphate acyltransferase, found in Cyanothece sp. (strain PCC 7425 / ATCC 29141).